The sequence spans 222 residues: Glutathione S-transferase 3 (222 aa).

The GST N-terminal domain occupies 2 to 83; sequence APLKLYGMPL…YIASKYASEG (82 aa). Glutathione-binding positions include serine 12, 13 to 14, 41 to 42, 54 to 55, and 67 to 68; these read PN, HK, QI, and ES. A GST C-terminal domain is found at 89-219; the sequence is ATASAAKLEV…AAIPLPPPPS (131 aa).

The protein belongs to the GST superfamily. Phi family. In terms of assembly, homodimer.

It catalyses the reaction RX + glutathione = an S-substituted glutathione + a halide anion + H(+). In terms of biological role, conjugation of reduced glutathione to a wide number of exogenous and endogenous hydrophobic electrophiles. Involved in the detoxification of certain herbicides. The polypeptide is Glutathione S-transferase 3 (Zea mays (Maize)).